The chain runs to 950 residues: F-box only protein 10 (950 aa).

In terms of domain architecture, F-box spans 1–48 (METGGLPLELWRMILAYLHLPDLGRCSLVCRAWYELILSLDSTRWRQL). 2 PbH1 repeats span residues 198-217 (SGHI…QVHG) and 238-260 (VPLC…TVEG). Residues 313-364 (IEGSQSPTSPVCSSPKPGSKEAEVGSDGERVAQTPDSSDGGLSPSGEDEDDE) form a disordered region. Over residues 315 to 324 (GSQSPTSPVC) the composition is skewed to polar residues. Phosphoserine occurs at positions 321 and 326. Basic and acidic residues predominate over residues 330–342 (GSKEAEVGSDGER). The span at 347 to 357 (PDSSDGGLSPS) shows a compositional bias: low complexity. 15 PbH1 repeats span residues 423–444 (VQGC…FVCS), 467–489 (NSKI…FLRL), 490–512 (EGGG…DIRK), 513–535 (KSNP…VVLG), 536–558 (NGKG…YILY), 559–581 (HGNP…AVNE), 582–604 (NGKG…DIRR), 605–627 (GGVP…VVGD), 628–650 (EGKG…WMMS), 651–673 (SSLP…AVFS), 713–735 (ITVA…FVQS), 736–758 (SEAL…TIVQ), 760–782 (SQLT…KVEF), 783–805 (QCKV…ITKG), and 828–850 (RSDT…AVRG).

Component of the SCF(FBXO10) complex consisting of CUL1, SKP1 and FBXO10. Interacts with BCL2. Interacts with PRDM1. As to expression, particularly highly expressed in B-cells.

It is found in the cytoplasm. It participates in protein modification; protein ubiquitination. Functionally, substrate-recognition component of the SCF (SKP1-CUL1-F-box protein)-type E3 ubiquitin ligase complex. Mediates the ubiquitination and degradation of BCL2, an antiapoptotic protein, thereby playing a role in apoptosis by controlling the stability of BCL2. Targets also the receptor for advanced glycation end products RAGE for ubiquitination and subsequent lysosomal degradation. Directly controls HGAL/GCSAM ubiquitination and degradation and thereby decreases BCR signaling. The polypeptide is F-box only protein 10 (Fbxo10) (Mus musculus (Mouse)).